Here is a 459-residue protein sequence, read N- to C-terminus: Transcription factor 7-like 2 (459 aa).

Residues 1 to 11 (MPQLNGGGGDD) show a composition bias toward gly residues. The tract at residues 1–53 (MPQLNGGGGDDLGANDELISFKDEGEQEEKNSENSSAERDLADVKSSLVNESE) is CTNNB1-binding. Residues 1–96 (MPQLNGGGGD…AKRQDGGLFK (96 aa)) form a disordered region. The segment covering 19 to 43 (ISFKDEGEQEEKNSENSSAERDLAD) has biased composition (basic and acidic residues). Residue Lys22 forms a Glycyl lysine isopeptide (Lys-Gly) (interchain with G-Cter in SUMO2) linkage. A compositionally biased stretch (polar residues) spans 47–56 (SLVNESETNQ). Over residues 63–91 (EAERRPPPRSESFRDKSRESLEEAAKRQD) the composition is skewed to basic and acidic residues. Thr178 and Thr189 each carry phosphothreonine; by NLK. A mediates interaction with MAD2L2 region spans residues 178–372 (TPLITYSNEH…RRWHALSREE (195 aa)). Positions 295 to 305 (TVKQESSQSDV) are enriched in polar residues. 2 disordered regions span residues 295-327 (TVKQ…KPHI) and 397-418 (RDNY…TNEH). Residue Lys297 forms a Glycyl lysine isopeptide (Lys-Gly) (interchain with G-Cter in SUMO) linkage. Basic and acidic residues predominate over residues 312 to 323 (KHQDSKKEEEKK). The segment at residues 327–395 (IKKPLNAFML…LHMQLYPGWS (69 aa)) is a DNA-binding region (HMG box). The Nuclear localization signal motif lies at 402-408 (KKKKRKR).

Belongs to the TCF/LEF family. Interacts with TGFB1I1. Interacts with SPIN1. Interacts with CTNNB1 (via the armadillo repeat); forms stable transcription complex. Interacts with EP300. Interacts with NLK. Interacts with CCDC85B (probably through the HMG box); prevents interaction with CTNNB1. Interacts with TNIK. Interacts with MAD2L2; prevents TCF7L2/TCF4 binding to promZIPK/DAPK3oters, negatively modulating its transcriptional activity. Interacts with ZIPK/DAPK3. Interacts with XIAP/BIRC4 and TLE3. Interacts with DDIT3/CHOP. The CTNNB1 and TCF7L2/TCF4 complex interacts with PML (isoform PML-4). Identified in a complex with CTNNB1 and FERMT2. Interacts with C11orf84/SPINDOC in a SPIN1-dependent manner. Interacts with DAZAP2; the interaction results in localization of DAZAP2 to the nucleus. Post-translationally, phosphorylated at Thr-178 and/or Thr-189 by NLK. Phosphorylation by NLK at these sites inhibits DNA-binding by TCF7L2/TCF4, thereby preventing transcriptional activation of target genes of the canonical Wnt/beta-catenin signaling pathway. In terms of processing, polysumoylated. Sumoylation is enhanced by PIAS family members and desumoylation is enhanced by SENP2. Sumoylation/desumoylation regulates TCF7L2/TCF4 transcription activity in the Wnt/beta-catenin signaling pathway without altering interaction with CTNNB1 nor binding to DNA. Detected in adult brain and liver, and at lower levels in intestine, with a clear increase from the distal colon to the duodenum. Detected at low levels in heart, lung, kidney, pituitary and testis.

It is found in the nucleus. The protein resides in the PML body. Its function is as follows. Participates in the Wnt signaling pathway and modulates MYC expression by binding to its promoter in a sequence-specific manner. Acts as a repressor in the absence of CTNNB1, and as activator in its presence. Activates transcription from promoters with several copies of the Tcf motif CCTTTGATC in the presence of CTNNB1. TLE1, TLE2, TLE3 and TLE4 repress transactivation mediated by TCF7L2/TCF4 and CTNNB1. Expression of dominant-negative mutants results in cell-cycle arrest in G1. Necessary for the maintenance of the epithelial stem-cell compartment of the small intestine. The polypeptide is Transcription factor 7-like 2 (Tcf7l2) (Mus musculus (Mouse)).